Here is a 176-residue protein sequence, read N- to C-terminus: Ribosome maturation factor RimM (176 aa).

Residues 97–176 enclose the PRC barrel domain; the sequence is EDEFYWRDLI…QITVDWDPDF (80 aa).

Belongs to the RimM family. Binds ribosomal protein uS19.

The protein localises to the cytoplasm. Functionally, an accessory protein needed during the final step in the assembly of 30S ribosomal subunit, possibly for assembly of the head region. Essential for efficient processing of 16S rRNA. May be needed both before and after RbfA during the maturation of 16S rRNA. It has affinity for free ribosomal 30S subunits but not for 70S ribosomes. In Shewanella sediminis (strain HAW-EB3), this protein is Ribosome maturation factor RimM.